Consider the following 416-residue polypeptide: Homeobox even-skipped homolog protein 1 (416 aa).

Disordered regions lie at residues 30–120 (AVSS…SDFY) and 138–178 (YQHS…LACS). The segment covering 72–82 (GLAGSAAGLGA) has biased composition (low complexity). Polar residues predominate over residues 102–114 (DSLSGQGQPSSSD). The segment at residues 183-242 (MRRYRTAFTREQIARLEKEFYRENYVSRPRRCELAAALNLPETTIKVWFQNRRMKDKRQR) is a DNA-binding region (homeobox).

Belongs to the even-skipped homeobox family.

It is found in the nucleus. May play a role in the specification of neuronal cell types. May play a role in the dorsoventral specification of mesodermal cell fate. The protein is Homeobox even-skipped homolog protein 1 (Evx1) of Mus musculus (Mouse).